We begin with the raw amino-acid sequence, 337 residues long: uncharacterized protein (337 aa).

Residues 22 to 76 (PFRLLSLPTLALKNVLLHIDFIDLLELSLASKKCEIYMKTCCLKIDSLHFHFRRI) form the F-box domain.

This is an uncharacterized protein from Caenorhabditis elegans.